A 78-amino-acid chain; its full sequence is Kassorin-S (78 aa).

Residues M1–A22 form the signal peptide. The propeptide occupies N23–R64. The segment at S24–E60 is disordered. Over residues K25–E60 the composition is skewed to basic and acidic residues. A Leucine amide modification is found at L77.

Belongs to the frog skin active peptide (FSAP) family. Brevinin subfamily. As to expression, expressed by the skin glands.

The protein resides in the secreted. Antimicrobial peptide. Active against the Gram-positive bacterium S.aureus (MIC=30 uM) and the yeast C.albicans (MIC=100 uM). Not effective against the Gram-negative bacterium E.coli at concentrations up to 250 uM. Lacks ability to induce contraction of smooth muscle in isolated guinea pig urinary bladder. Elicits histamine release from rat peritoneal mast cells. This chain is Kassorin-S, found in Kassina senegalensis (Senegal running frog).